The chain runs to 123 residues: Glucose starvation-inducible protein B (123 aa).

2 stretches are compositionally biased toward basic and acidic residues: residues 1–29 (MADN…KEFY) and 41–109 (SKNH…KEFY). Positions 1–123 (MADNNKMSRE…SKGGNARNND (123 aa)) are disordered. Tandem repeats lie at residues 13 to 32 (GRKG…YQEI), 33 to 52 (GQKG…YQEI), 53 to 72 (GEKG…YQEI), 73 to 92 (GEKG…YQEI), and 93 to 112 (GRKG…YQEI). A 5 X 20 AA approximate tandem repeats region spans residues 13-120 (GRKGGETTSK…EIGSKGGNAR (108 aa)).

Functionally, involved in an adaptive response to nutrient deprivation other than sporulation. This chain is Glucose starvation-inducible protein B (gsiB), found in Bacillus subtilis (strain 168).